The following is a 475-amino-acid chain: 1,3-beta-glucanosyltransferase gel2 (475 aa).

The N-terminal stretch at 1 to 21 (MLPTYVRLFTAVCALATTASA) is a signal peptide. A disulfide bridge connects residues C69 and C98. Residues Y87, N159, E160, and D201 each coordinate (1,3-beta-D-glucosyl)n. E160 serves as the catalytic Proton donor. Disulfide bonds link C215–C350 and C234–C265. N236 is a glycosylation site (N-linked (GlcNAc...) asparagine). Catalysis depends on E262, which acts as the Nucleophile. Y294 contacts (1,3-beta-D-glucosyl)n. Residues N311, N339, and N357 are each glycosylated (N-linked (GlcNAc...) asparagine). The disordered stretch occupies residues 420–451 (GESNTPGAHSSGSTSGSSSSGGSSSSSSDKES). Residues 429-446 (SSGSTSGSSSSGGSSSSS) are compositionally biased toward low complexity. The GPI-like-anchor amidated serine moiety is linked to residue S451. The propeptide at 452–475 (AAGTISVPFVGLLSAASFMAFFML) is removed in mature form.

This sequence belongs to the glycosyl hydrolase 72 family. Post-translationally, the GPI-like anchor contains a phosphoceramide lipid group.

It is found in the cell membrane. In terms of biological role, splits internally a 1,3-beta-glucan molecule and transfers the newly generated reducing end (the donor) to the non-reducing end of another 1,3-beta-glucan molecule (the acceptor) forming a 1,3-beta linkage, resulting in the elongation of 1,3-beta-glucan chains in the cell wall. Involved in cell wall morphogenesis. The protein is 1,3-beta-glucanosyltransferase gel2 (gel2) of Aspergillus fumigatus (strain CBS 144.89 / FGSC A1163 / CEA10) (Neosartorya fumigata).